A 253-amino-acid chain; its full sequence is DNA repair protein RecO (253 aa).

This sequence belongs to the RecO family.

Functionally, involved in DNA repair and RecF pathway recombination. The protein is DNA repair protein RecO of Dehalococcoides mccartyi (strain CBDB1).